The sequence spans 282 residues: NADPH-dependent 7-cyano-7-deazaguanine reductase (282 aa).

Residue 88–90 (IES) coordinates substrate. 90–91 (SK) serves as a coordination point for NADPH. Cysteine 190 acts as the Thioimide intermediate in catalysis. Aspartate 197 acts as the Proton donor in catalysis. 229-230 (HE) serves as a coordination point for substrate. An NADPH-binding site is contributed by 258–259 (RG).

Belongs to the GTP cyclohydrolase I family. QueF type 2 subfamily. In terms of assembly, homodimer.

The protein resides in the cytoplasm. The catalysed reaction is 7-aminomethyl-7-carbaguanine + 2 NADP(+) = 7-cyano-7-deazaguanine + 2 NADPH + 3 H(+). The protein operates within tRNA modification; tRNA-queuosine biosynthesis. Functionally, catalyzes the NADPH-dependent reduction of 7-cyano-7-deazaguanine (preQ0) to 7-aminomethyl-7-deazaguanine (preQ1). The chain is NADPH-dependent 7-cyano-7-deazaguanine reductase from Salmonella paratyphi B (strain ATCC BAA-1250 / SPB7).